The chain runs to 111 residues: Ribonuclease P protein component (111 aa).

Belongs to the RnpA family. As to quaternary structure, consists of a catalytic RNA component (M1 or rnpB) and a protein subunit.

It catalyses the reaction Endonucleolytic cleavage of RNA, removing 5'-extranucleotides from tRNA precursor.. Functionally, RNaseP catalyzes the removal of the 5'-leader sequence from pre-tRNA to produce the mature 5'-terminus. It can also cleave other RNA substrates such as 4.5S RNA. The protein component plays an auxiliary but essential role in vivo by binding to the 5'-leader sequence and broadening the substrate specificity of the ribozyme. This chain is Ribonuclease P protein component, found in Streptococcus thermophilus (strain CNRZ 1066).